Reading from the N-terminus, the 765-residue chain is Beta-glucosidase cel3A (765 aa).

A signal peptide spans methionine 1–alanine 24. 10 N-linked (GlcNAc...) asparagine glycosylation sites follow: asparagine 66, asparagine 124, asparagine 250, asparagine 304, asparagine 311, asparagine 349, asparagine 549, asparagine 588, asparagine 657, and asparagine 681.

This sequence belongs to the glycosyl hydrolase 3 family.

The protein resides in the secreted. It carries out the reaction Hydrolysis of terminal, non-reducing beta-D-glucosyl residues with release of beta-D-glucose.. Its pathway is glycan metabolism; cellulose degradation. Its function is as follows. Beta-glucosidases are one of a number of cellulolytic enzymes involved in the degradation of cellulosic biomass. Catalyzes the last step releasing glucose from the inhibitory cellobiose. Shows higher activities on cellobiose and cellotriose but lower activities on laminarioligosaccharides and polymers. The protein is Beta-glucosidase cel3A of Pyricularia oryzae (strain 70-15 / ATCC MYA-4617 / FGSC 8958) (Rice blast fungus).